The sequence spans 211 residues: uncharacterized protein (211 aa).

The Zn(2+) site is built by H54, H56, D58, H59, H129, D148, and H189.

Belongs to the metallo-beta-lactamase superfamily. Glyoxalase II family. It depends on Zn(2+) as a cofactor.

This is an uncharacterized protein from Aquifex aeolicus (strain VF5).